The chain runs to 174 residues: Adenylate kinase (174 aa).

An NMP region spans residues 12–41 (STGDMLRAAIKAGTPLGLEAKKIIDEGGLV). Residues T13, R18, 39 to 41 (GLV), 67 to 70 (GFPR), and Q74 each bind AMP. Positions 104-141 (GRRVHLASGRTYHIAYNPPKVEGKDDVTGEDLIQRDDD) are LID. ATP is bound by residues R105 and 114–115 (TY). 2 residues coordinate AMP: R138 and R149.

Belongs to the adenylate kinase family. Monomer.

It localises to the cytoplasm. It carries out the reaction AMP + ATP = 2 ADP. It participates in purine metabolism; AMP biosynthesis via salvage pathway; AMP from ADP: step 1/1. Its function is as follows. Catalyzes the reversible transfer of the terminal phosphate group between ATP and AMP. Plays an important role in cellular energy homeostasis and in adenine nucleotide metabolism. The protein is Adenylate kinase of Neisseria animalis.